The following is a 112-amino-acid chain: Nitrogenase-stabilizing/protective protein NifW (112 aa).

Belongs to the NifW family. Homotrimer; associates with NifD.

May protect the nitrogenase Fe-Mo protein from oxidative damage. The protein is Nitrogenase-stabilizing/protective protein NifW of Rhodopseudomonas palustris (strain BisA53).